Consider the following 646-residue polypeptide: Cysteine-rich receptor-like protein kinase 37 (646 aa).

The signal sequence occupies residues 1–26 (MGKSCVVTSSFSLLLLFLQTLKYVHA). 2 Gnk2-homologous domains span residues 27-132 (GFIC…NHST) and 142-252 (TINP…LYPY). At 27–287 (GFICYGDFFN…RDEKSFQGSN (261 aa)) the chain is on the extracellular side. Residues asparagine 62, asparagine 129, asparagine 169, and asparagine 180 are each glycosylated (N-linked (GlcNAc...) asparagine). A helical membrane pass occupies residues 288-308 (IAIIVVPSVINLIIFVVLIFS). The Cytoplasmic segment spans residues 309-646 (WKRKQSHTII…LTRPSLSLGH (338 aa)). The Protein kinase domain occupies 345–626 (FSLENKLGQG…LFWLERHATI (282 aa)). Residues 351–359 (LGQGGFGSV) and lysine 373 each bind ATP. At tyrosine 418 the chain carries Phosphotyrosine. The Proton acceptor role is filled by aspartate 470. Serine 474 carries the post-translational modification Phosphoserine. At threonine 510 the chain carries Phosphothreonine. Phosphotyrosine is present on tyrosine 518.

The protein belongs to the protein kinase superfamily. Ser/Thr protein kinase family. CRK subfamily.

Its subcellular location is the membrane. It catalyses the reaction L-seryl-[protein] + ATP = O-phospho-L-seryl-[protein] + ADP + H(+). The enzyme catalyses L-threonyl-[protein] + ATP = O-phospho-L-threonyl-[protein] + ADP + H(+). The protein is Cysteine-rich receptor-like protein kinase 37 (CRK37) of Arabidopsis thaliana (Mouse-ear cress).